Consider the following 771-residue polypeptide: Post-GPI attachment to proteins factor 6 (771 aa).

The signal sequence occupies residues 1–34 (MGRAGTGTGGEAVAAVVAGPLLLLLLARPPPASA). The Extracellular portion of the chain corresponds to 35–545 (GYSGKSEVGL…STAQTVAQQR (511 aa)). N-linked (GlcNAc...) asparagine glycosylation occurs at Asn144. Residues 322–343 (FNASSGLLSPSPDHQDLGRSGR) form a disordered region. Residues 334-343 (DHQDLGRSGR) are compositionally biased toward basic and acidic residues. Asn407 and Asn431 each carry an N-linked (GlcNAc...) asparagine glycan. Positions 497–533 (PCLNDCGPYGQCLLLRRHSYLYASCSCKAGWRGWSCT) constitute an EGF-like domain. 3 cysteine pairs are disulfide-bonded: Cys498–Cys508, Cys502–Cys521, and Cys523–Cys532. The chain crosses the membrane as a helical span at residues 546–566 (AATLLLTLSNLMFLAPIAVSV). Residues 567 to 568 (RR) are Cytoplasmic-facing. The helical transmembrane segment at 569 to 589 (FFLVEASVYAYTMFFSTFYHA) threads the bilayer. Over 590–605 (CDQPGEAVLCILSYDT) the chain is Extracellular. The helical transmembrane segment at 606 to 626 (LQYCDFLGSGAAIWVTILCMA) threads the bilayer. At 627–629 (RLK) the chain is on the cytoplasmic side. A helical membrane pass occupies residues 630–650 (TVLKYVLFLLGTLVIAMSLQL). Residues 651–653 (DRR) lie on the Extracellular side of the membrane. Residues 654 to 674 (GMWNMLGPCLFAFVIMASMWA) form a helical membrane-spanning segment. Residues 675-690 (YRCGHRRQCYPTSWQR) are Cytoplasmic-facing. Residues 691–711 (WAFYLLPGVSMASVGIAIYTS) form a helical membrane-spanning segment. The Extracellular segment spans residues 712–717 (MMTSDN). A helical transmembrane segment spans residues 718 to 738 (YYYTHSIWHILLAGSAALLLP). Residues 739-771 (PPDQPAEPWACSQKFPCHYQICKNDREELYAVT) lie on the Cytoplasmic side of the membrane.

This sequence belongs to the TMEM8 family. Glycosylated. In terms of tissue distribution, expressed in pancreas, placenta, spleen, liver, kidney, bone marrow, peripheral blood leukocytes and tonsil.

The protein resides in the cell membrane. It localises to the lysosome membrane. The enzyme catalyses a 1,2-diacyl-sn-glycero-3-phosphocholine + H2O = a 1-acyl-sn-glycero-3-phosphocholine + a fatty acid + H(+). Involved in the lipid remodeling steps of GPI-anchor maturation. Lipid remodeling steps consist in the generation of 2 saturated fatty chains at the sn-2 position of GPI-anchor proteins (GPI-AP). Has phospholipase A2 activity that removes an acyl-chain at the sn-2 position of GPI-anchors during the remodeling of GPI. Required for the shedding of the GPI-AP CRIPTO, but not CFC1, at the cell surface. Shedding of CRIPTO modulates Nodal signaling by allowing soluble CRIPTO to act as a Nodal coreceptor on other cells. Also indirectly involved in the translocation of RAC1 from the cytosol to the plasma membrane by maintaining the steady state amount of CAV1-enriched plasma membrane subdomains, stabilizing RAC1 at the plasma membrane. In contrast to myomaker (TMEM8C), has no fusogenic activity. This Homo sapiens (Human) protein is Post-GPI attachment to proteins factor 6.